The following is a 673-amino-acid chain: Acetate--CoA ligase [ADP-forming] II (673 aa).

Residues 9-45 (KALLEKYGIKTAKCIFCETEEQAVKAAKEIGFPVVMK) enclose the ATP-grasp domain. 35–46 (AKEIGFPVVMKV) contributes to the ATP binding site.

This sequence in the N-terminal section; belongs to the acetate CoA ligase beta subunit family. In the C-terminal section; belongs to the acetate CoA ligase alpha subunit family. In terms of assembly, homodimer.

It carries out the reaction acetate + ATP + CoA = acetyl-CoA + ADP + phosphate. Activity requires divalent metal cations. In terms of biological role, catalyzes the reversible conversion of a variety of acids to the corresponding acyl-CoA esters. Shows the highest activity with the aryl acids, indoleacetate and phenylacetate, as compared to acetate. In the reverse direction, phenylacetyl-CoA is the best substrate. Seems to be involved primarily in the degradation of aryl-CoA esters to the corresponding acids. Participates in the degradation of branched-chain amino acids via branched-chain-acyl-CoA esters. This chain is Acetate--CoA ligase [ADP-forming] II, found in Archaeoglobus fulgidus (strain ATCC 49558 / DSM 4304 / JCM 9628 / NBRC 100126 / VC-16).